Reading from the N-terminus, the 175-residue chain is Phosphatidylglycerol/phosphatidylinositol transfer protein (175 aa).

Positions 1–21 are cleaved as a signal peptide; the sequence is MKFLSTAAALLVCLAPVSTTA. The propeptide occupies 22–37; sequence RSLDFFKSSQSPIQAQ.

It belongs to the NPC2 family. Monomer.

It is found in the cytoplasm. It localises to the cytoplasmic vesicle. Its subcellular location is the golgi apparatus. Its function is as follows. Catalyzes the intermembrane transfer of phosphatidylglycerol and phosphatidylinositol. The chain is Phosphatidylglycerol/phosphatidylinositol transfer protein (pltp) from Aspergillus oryzae (strain ATCC 42149 / RIB 40) (Yellow koji mold).